Here is a 207-residue protein sequence, read N- to C-terminus: Casparian strip membrane protein 1 (207 aa).

Ala2 is subject to N-acetylalanine. Topologically, residues 2–44 are cytoplasmic; that stretch reads AKESTTIDVGEPNTMTKSTSHVVVDEKKKKGFVAAAAGGGYKR. A helical transmembrane segment spans residues 45 to 65; the sequence is GLAVFDFLLRLAAIGITIGAS. Topologically, residues 66–95 are extracellular; that stretch reads SVMFTAEETLPFFTQFLQFQAGYDDFPTFQ. A helical transmembrane segment spans residues 96 to 116; it reads FFVIAIAIVASYLVLSLPFSI. The Cytoplasmic portion of the chain corresponds to 117 to 128; that stretch reads VTIVRPLAVAPR. A helical transmembrane segment spans residues 129-149; it reads LILLISDTVVLTLTTAAAAAA. The Extracellular portion of the chain corresponds to 150–181; it reads ASIVYLAHNGNTNTNWLPICQQFGDFCQTAST. Residues 182–202 traverse the membrane as a helical segment; the sequence is AVVAASISVAFFVLLIVISAI. At 203 to 207 the chain is on the cytoplasmic side; it reads ALKRH.

The protein belongs to the Casparian strip membrane proteins (CASP) family. Homodimer and heterodimers.

The protein localises to the cell membrane. Regulates membrane-cell wall junctions and localized cell wall deposition. Required for establishment of the Casparian strip membrane domain (CSD) and the subsequent formation of Casparian strips, a cell wall modification of the root endodermis that determines an apoplastic barrier between the intraorganismal apoplasm and the extraorganismal apoplasm and prevents lateral diffusion. This Raphanus raphanistrum (Wild radish) protein is Casparian strip membrane protein 1.